The following is a 124-amino-acid chain: MARIVGVELPDNKRIVFALPRIYGIGKSTAEDICEALGIDPMQKLGELTPEQINTLQDYITAHYKVEGDLRREVAMNIKRLMDIKCYRGIRHQRGLPVRGQRTRHNARTRKGPRKTVGAKKGKR.

Residues 95 to 124 (GLPVRGQRTRHNARTRKGPRKTVGAKKGKR) form a disordered region. Over residues 101 to 124 (QRTRHNARTRKGPRKTVGAKKGKR) the composition is skewed to basic residues.

Belongs to the universal ribosomal protein uS13 family. As to quaternary structure, part of the 30S ribosomal subunit. Forms a loose heterodimer with protein S19. Forms two bridges to the 50S subunit in the 70S ribosome.

Located at the top of the head of the 30S subunit, it contacts several helices of the 16S rRNA. In the 70S ribosome it contacts the 23S rRNA (bridge B1a) and protein L5 of the 50S subunit (bridge B1b), connecting the 2 subunits; these bridges are implicated in subunit movement. Contacts the tRNAs in the A and P-sites. This chain is Small ribosomal subunit protein uS13, found in Coprothermobacter proteolyticus (strain ATCC 35245 / DSM 5265 / OCM 4 / BT).